The following is a 224-amino-acid chain: Probable Brix domain-containing ribosomal biogenesis protein (224 aa).

The Brix domain maps to 1 to 196 (MMLITTSHRP…IWIMEDGRRW (196 aa)).

In terms of biological role, probably involved in the biogenesis of the ribosome. This chain is Probable Brix domain-containing ribosomal biogenesis protein, found in Pyrococcus horikoshii (strain ATCC 700860 / DSM 12428 / JCM 9974 / NBRC 100139 / OT-3).